We begin with the raw amino-acid sequence, 135 residues long: Small ribosomal subunit protein uS11 (135 aa).

It belongs to the universal ribosomal protein uS11 family. As to quaternary structure, part of the 30S ribosomal subunit. Interacts with proteins S7 and S18. Binds to IF-3.

In terms of biological role, located on the platform of the 30S subunit, it bridges several disparate RNA helices of the 16S rRNA. Forms part of the Shine-Dalgarno cleft in the 70S ribosome. This Polynucleobacter necessarius subsp. necessarius (strain STIR1) protein is Small ribosomal subunit protein uS11.